Here is a 484-residue protein sequence, read N- to C-terminus: Oxysterol-binding protein-related protein 2 (484 aa).

Residues serine 19 and serine 20 each carry the phosphoserine modification. A disordered region spans residues 35 to 61 (DLDTSKSTRSGKNGEKPQQENGIQKHR). Residues lysine 90 and 178–179 (HH) each bind a 1,2-diacyl-sn-glycero-3-phospho-(1D-myo-inositol-4,5-bisphosphate). 2 stretches are compositionally biased toward basic and acidic residues: residues 319–340 (KQEK…EKAN) and 424–450 (SQEK…EWRT). Disordered stretches follow at residues 319–348 (KQEK…GDVA) and 423–454 (ASQE…RWFS). A 1,2-diacyl-sn-glycero-3-phospho-(1D-myo-inositol-4,5-bisphosphate) is bound at residue 431 to 435 (EEKQR).

The protein belongs to the OSBP family. As to quaternary structure, monomer. Homotetramer; phosphatidylinositol-4,5-bisphosphate binding promotes formation of stable tetramers. Interacts with DIAPH1. In terms of tissue distribution, detected in cochlea, in inner and outer hair cells in the organ of Corti (at protein level).

It localises to the cytoplasm. It is found in the cytosol. The protein resides in the lipid droplet. The protein localises to the cell membrane. In terms of biological role, intracellular transport protein that binds sterols and phospholipids and mediates lipid transport between intracellular compartments. Increases plasma membrane cholesterol levels and decreases phosphatidylinositol-4,5-bisphosphate levels in the cell membrane. Binds phosphoinositides, such as phosphatidylinositol-4,5-bisphosphate. Exhibits strong binding to phosphatidic acid and weak binding to phosphatidylinositol 3-phosphate. Binds cholesterol, dehydroergosterol, 22(R)-hydroxycholesterol and 25-hydroxycholesterol (in vitro). The protein is Oxysterol-binding protein-related protein 2 (Osbpl2) of Mus musculus (Mouse).